We begin with the raw amino-acid sequence, 376 residues long: Putative aryl-alcohol dehydrogenase AAD14 (376 aa).

Tyr-76 functions as the Proton donor in the catalytic mechanism. His-151 provides a ligand contact to substrate. Residue 236-246 (DVMGGGRFQSK) participates in NADP(+) binding.

The protein belongs to the aldo/keto reductase family. Aldo/keto reductase 2 subfamily.

In Saccharomyces cerevisiae (strain ATCC 204508 / S288c) (Baker's yeast), this protein is Putative aryl-alcohol dehydrogenase AAD14 (AAD14).